Reading from the N-terminus, the 351-residue chain is Tryptophan--tRNA ligase 2 (351 aa).

Residues 1–24 are disordered; that stretch reads MPFVDLEVPTMTTPTPAATPARPR. Residues 9 to 24 are compositionally biased toward low complexity; the sequence is PTMTTPTPAATPARPR. The 'HIGH' region signature appears at 31 to 39; the sequence is PTGALHLGH. Positions 215–219 match the 'KMSKS' region motif; the sequence is KMSKS. K218 contributes to the ATP binding site.

The protein belongs to the class-I aminoacyl-tRNA synthetase family. As to quaternary structure, homodimer. Forms a complex with nos; one homodimer of trpS2 binds one homodimer of nos.

It carries out the reaction tRNA(Trp) + L-tryptophan + ATP = L-tryptophyl-tRNA(Trp) + AMP + diphosphate + H(+). Functionally, catalyzes the formation of 5'adenyl-Trp and tRNA(Trp) but with 5-fold less activity than TrpRS. Increases the solubility of the nitric oxide synthase oxygenase (nos), as well as its affinity for substrate L-arginine and its nitric-oxide synthase activity. The complex between trpS2 and nos catalyzes the regioselective nitration of tryptophan at the 4-position. The sequence is that of Tryptophan--tRNA ligase 2 (trpS2) from Deinococcus radiodurans (strain ATCC 13939 / DSM 20539 / JCM 16871 / CCUG 27074 / LMG 4051 / NBRC 15346 / NCIMB 9279 / VKM B-1422 / R1).